Reading from the N-terminus, the 333-residue chain is 1,5-anhydro-D-fructose reductase (333 aa).

NADP(+) is bound by residues 9–12, 33–34, Arg-38, 71–76, 93–94, Asn-120, 162–163, and Tyr-283; these read ASTI, SS, TTNELH, EK, and WR.

The protein belongs to the Gfo/Idh/MocA family. In terms of assembly, monomer.

The enzyme catalyses 1,5-anhydro-D-mannitol + NADP(+) = 1,5-anhydro-D-fructose + NADPH + H(+). In terms of biological role, catalyzes the NADPH-specific reduction of 1,5-anhydro-D-fructose to 1,5-anhydro-D-mannitol. This Rhizobium meliloti (strain 1021) (Ensifer meliloti) protein is 1,5-anhydro-D-fructose reductase (afr).